Reading from the N-terminus, the 275-residue chain is 2,3,4,5-tetrahydropyridine-2,6-dicarboxylate N-succinyltransferase (275 aa).

Substrate-binding residues include R106 and D143.

This sequence belongs to the transferase hexapeptide repeat family. As to quaternary structure, homotrimer.

The protein resides in the cytoplasm. The enzyme catalyses (S)-2,3,4,5-tetrahydrodipicolinate + succinyl-CoA + H2O = (S)-2-succinylamino-6-oxoheptanedioate + CoA. It functions in the pathway amino-acid biosynthesis; L-lysine biosynthesis via DAP pathway; LL-2,6-diaminopimelate from (S)-tetrahydrodipicolinate (succinylase route): step 1/3. The sequence is that of 2,3,4,5-tetrahydropyridine-2,6-dicarboxylate N-succinyltransferase from Rickettsia bellii (strain RML369-C).